We begin with the raw amino-acid sequence, 507 residues long: Probable serine/threonine-protein kinase DDB_G0268078 (507 aa).

Residues 4 to 286 (YQFIKQVGDG…PLQALQHRYF (283 aa)) form the Protein kinase domain. ATP-binding positions include 10-18 (VGDGAYGDV) and K33. Residue D125 is the Proton acceptor of the active site. A compositionally biased stretch (low complexity) spans 323–347 (NYSNNNNNNNLNSNSENLNNVNKNN). Disordered stretches follow at residues 323-364 (NYSN…PKNS), 381-404 (NVNN…KLDS), and 428-507 (QQPP…NSKL). The span at 348–361 (QQPHSPQKIQTPKP) shows a compositional bias: polar residues. Low complexity predominate over residues 381–399 (NVNNNNNNYNSNTTSGYYN). Positions 429–450 (QPPPQSQPPQSQPPPQSQPPPI) are enriched in pro residues. Low complexity predominate over residues 451 to 470 (LTQQQQQQQQQQQQQQQLPS). Polar residues-rich tracts occupy residues 471–481 (KTTIYHNTNHL) and 491–507 (RGIS…NSKL).

It belongs to the protein kinase superfamily. CMGC Ser/Thr protein kinase family. CDC2/CDKX subfamily.

The catalysed reaction is L-seryl-[protein] + ATP = O-phospho-L-seryl-[protein] + ADP + H(+). It carries out the reaction L-threonyl-[protein] + ATP = O-phospho-L-threonyl-[protein] + ADP + H(+). This is Probable serine/threonine-protein kinase DDB_G0268078 from Dictyostelium discoideum (Social amoeba).